The following is a 542-amino-acid chain: Organic anion transporter 3 (542 aa).

Topologically, residues 1–9 are cytoplasmic; sequence MTFSEILDR. Ser-4 bears the Phosphoserine mark. A helical membrane pass occupies residues 10 to 30; sequence VGSMGHFQFLHVAILGLPILN. At 31–123 the chain is on the extracellular side; the sequence is MANHNLLQIF…LVCNSNKLKE (93 aa). 2 N-linked (GlcNAc...) asparagine glycosylation sites follow: Asn-86 and Asn-102. Residues 124–144 form a helical membrane-spanning segment; it reads MAQSIFMAGILIGGLVLGDLS. Residues 145–154 are Cytoplasmic-facing; the sequence is DRFGRRPILT. The helical transmembrane segment at 155–175 threads the bilayer; the sequence is CSYLLLAASGSGAAFSPTFPI. Tyr-176 is a topological domain (extracellular). Residues 177–197 traverse the membrane as a helical segment; it reads MVFRFLCGFGISGITLSTVIL. The Cytoplasmic portion of the chain corresponds to 198 to 212; sequence NVEWVPTRMRAIMST. Residues 213–233 form a helical membrane-spanning segment; the sequence is ALGYCYTFGQFILPGLAYAIP. Residues 234–236 are Extracellular-facing; that stretch reads QWR. Residues 237–257 traverse the membrane as a helical segment; sequence WLQLTVSIPFFVFFLSSWWTP. Over 258 to 327 the chain is Cytoplasmic; it reads ESIRWLVLSG…FRIPMLRRMT (70 aa). The helical transmembrane segment at 328–348 threads the bilayer; the sequence is FCLSLAWFATGFAYYSLAMGV. The Extracellular segment spans residues 349–354; it reads EEFGVN. Residues 355-375 traverse the membrane as a helical segment; sequence LYILQIIFGGVDVPAKFITIL. Topologically, residues 376–386 are cytoplasmic; sequence SLSYLGRHTTQ. The chain crosses the membrane as a helical span at residues 387 to 407; sequence AAALLLAGGAILALTFVPLDL. The Extracellular portion of the chain corresponds to 408 to 411; sequence QTVR. Residues 412–432 traverse the membrane as a helical segment; the sequence is TVLAVFGKGCLSSSFSCLFLY. At 433–471 the chain is on the cytoplasmic side; that stretch reads TSELYPTVIRQTGMGVSNLWTRVGSMVSPLVKITGEVQP. A helical transmembrane segment spans residues 472–492; the sequence is FIPNIIYGITALLGGSAALFL. Topologically, residues 493 to 542 are extracellular; the sequence is PETLNQPLPETIEDLENWSLRAKKPKQEPEVEKASQRIPLQPHGPGLGSS. Residues 515 to 542 are disordered; that stretch reads KKPKQEPEVEKASQRIPLQPHGPGLGSS. The span at 517–527 shows a compositional bias: basic and acidic residues; that stretch reads PKQEPEVEKAS.

Belongs to the major facilitator (TC 2.A.1) superfamily. Organic cation transporter (TC 2.A.1.19) family. Strongly expressed in kidney. Weaker expression in brain and skeletal muscle. Expressed in adrenal glands.

It localises to the basolateral cell membrane. The catalysed reaction is estrone 3-sulfate(out) + glutarate(in) = estrone 3-sulfate(in) + glutarate(out). It catalyses the reaction estrone 3-sulfate(in) + 2-oxoglutarate(out) = estrone 3-sulfate(out) + 2-oxoglutarate(in). The enzyme catalyses glutarate(in) + 2-oxoglutarate(out) = glutarate(out) + 2-oxoglutarate(in). It carries out the reaction urate(in) + 2-oxoglutarate(out) = urate(out) + 2-oxoglutarate(in). The catalysed reaction is taurocholate(out) + glutarate(in) = taurocholate(in) + glutarate(out). It catalyses the reaction dehydroepiandrosterone 3-sulfate(out) + glutarate(in) = dehydroepiandrosterone 3-sulfate(in) + glutarate(out). The enzyme catalyses prostaglandin F2alpha(out) + glutarate(in) = prostaglandin F2alpha(in) + glutarate(out). It carries out the reaction prostaglandin F2alpha(out) + 2-oxoglutarate(in) = prostaglandin F2alpha(in) + 2-oxoglutarate(out). The catalysed reaction is (R)-carnitine(out) + 2-oxoglutarate(in) = (R)-carnitine(in) + 2-oxoglutarate(out). It catalyses the reaction glutarate(in) + (R)-carnitine(out) = glutarate(out) + (R)-carnitine(in). The enzyme catalyses prostaglandin E2(out) + 2-oxoglutarate(in) = prostaglandin E2(in) + 2-oxoglutarate(out). It carries out the reaction prostaglandin E2(out) + glutarate(in) = prostaglandin E2(in) + glutarate(out). The catalysed reaction is urate(in) + glutarate(out) = urate(out) + glutarate(in). It catalyses the reaction taurocholate(out) + 2-oxoglutarate(in) = taurocholate(in) + 2-oxoglutarate(out). The enzyme catalyses dehydroepiandrosterone 3-sulfate(out) + 2-oxoglutarate(in) = dehydroepiandrosterone 3-sulfate(in) + 2-oxoglutarate(out). It carries out the reaction kynurenate(out) + a dicarboxylate(in) = kynurenate(in) + a dicarboxylate(out). The catalysed reaction is (indol-3-yl)acetate(out) + a dicarboxylate(in) = (indol-3-yl)acetate(in) + a dicarboxylate(out). It catalyses the reaction indoxyl sulfate(out) + a dicarboxylate(in) = indoxyl sulfate(in) + a dicarboxylate(out). The enzyme catalyses N-benzoylglycine(out) + a dicarboxylate(in) = N-benzoylglycine(in) + a dicarboxylate(out). It carries out the reaction 3-carboxy-4-methyl-5-propyl-2-furanpropanoate(out) + a dicarboxylate(in) = 3-carboxy-4-methyl-5-propyl-2-furanpropanoate(in) + a dicarboxylate(out). The catalysed reaction is (6R)-L-erythro-5,6,7,8-tetrahydrobiopterin(out) + a dicarboxylate(in) = (6R)-L-erythro-5,6,7,8-tetrahydrobiopterin(in) + a dicarboxylate(out). It catalyses the reaction L-erythro-7,8-dihydrobiopterin(out) + a dicarboxylate(in) = L-erythro-7,8-dihydrobiopterin(in) + a dicarboxylate(out). The enzyme catalyses L-sepiapterin(out) + a dicarboxylate(in) = L-sepiapterin(in) + a dicarboxylate(out). In terms of biological role, functions as an organic anion/dicarboxylate exchanger that couples organic anion uptake indirectly to the sodium gradient. Transports organic anions such as estrone 3-sulfate (E1S) and urate in exchange for dicarboxylates such as glutarate or ketoglutarate (2-oxoglutarate). Plays an important role in the excretion of endogenous and exogenous organic anions, especially from the kidney and the brain. E1S transport is pH- and chloride-dependent and may also involve E1S/cGMP exchange. Responsible for the transport of prostaglandin E2 (PGE2) and prostaglandin F2(alpha) (PGF2(alpha)) in the basolateral side of the renal tubule. Involved in the transport of neuroactive tryptophan metabolites kynurenate and xanthurenate. Functions as a biopterin transporters involved in the uptake and the secretion of coenzymes tetrahydrobiopterin (BH4), dihydrobiopterin (BH2) and sepiapterin to urine, thereby determining baseline levels of blood biopterins. May be involved in the basolateral transport of steviol, a metabolite of the popular sugar substitute stevioside. May participate in the detoxification/ renal excretion of drugs and xenobiotics, such as the histamine H(2)-receptor antagonists fexofenadine and cimetidine, the antibiotic benzylpenicillin (PCG), the anionic herbicide 2,4-dichloro-phenoxyacetate (2,4-D), the diagnostic agent p-aminohippurate (PAH), the antiviral acyclovir (ACV), and the mycotoxin ochratoxin (OTA), by transporting these exogenous organic anions across the cell membrane in exchange for dicarboxylates such as 2-oxoglutarate. Contributes to the renal uptake of potent uremic toxins (indoxyl sulfate (IS), indole acetate (IA), hippurate/N-benzoylglycine (HA) and 3-carboxy-4-methyl-5-propyl-2-furanpropionate (CMPF)), pravastatin, PCG, E1S and dehydroepiandrosterone sulfate (DHEAS), and is partly involved in the renal uptake of temocaprilat (an angiotensin-converting enzyme (ACE) inhibitor). May contribute to the release of cortisol in the adrenals. Involved in one of the detoxification systems on the choroid plexus (CP), removes substrates such as E1S or taurocholate (TC), PCG, 2,4-D and PAH, from the cerebrospinal fluid (CSF) to the blood for eventual excretion in urine and bile. Also contributes to the uptake of several other organic compounds such as the prostanoids prostaglandin E(2) and prostaglandin F(2-alpha), L-carnitine, and the therapeutic drugs allopurinol, 6-mercaptopurine (6-MP) and 5-fluorouracil (5-FU). Mediates the transport of PAH, PCG, and the statins pravastatin and pitavastatin, from the cerebrum into the blood circulation across the blood-brain barrier (BBB). In summary, plays a role in the efflux of drugs and xenobiotics, helping reduce their undesired toxicological effects on the body. The protein is Organic anion transporter 3 of Homo sapiens (Human).